Consider the following 133-residue polypeptide: MAIQQPEQFYGTGRRKSAVARVFLRPGEGKIIVNGKEFQTYFRGLLRAVHALQAFRETGTAGRYDAVITVNGGGPTGQADAIKLGIARALLKVNPDFRAQMKPKGLLTRDPREVERKKYGLKKARRAPQFSKR.

Residues 102 to 133 are disordered; it reads KPKGLLTRDPREVERKKYGLKKARRAPQFSKR. A compositionally biased stretch (basic and acidic residues) spans 107 to 118; that stretch reads LTRDPREVERKK. Residues 119 to 133 are compositionally biased toward basic residues; it reads YGLKKARRAPQFSKR.

The protein belongs to the universal ribosomal protein uS9 family.

The sequence is that of Small ribosomal subunit protein uS9 from Deinococcus deserti (strain DSM 17065 / CIP 109153 / LMG 22923 / VCD115).